Reading from the N-terminus, the 156-residue chain is Longistatin (156 aa).

A signal peptide spans 1–21; that stretch reads MTHRRLLWALCVAALLGVVAA. EF-hand domains are found at residues 70-105 and 123-156; these read SQDE…TNHH and DIAS…TNQI. Positions 83, 85, 87, 89, 94, 135, 137, 139, 141, and 146 each coordinate Ca(2+).

As to quaternary structure, interacts with host fibrin. Interacts with human RAGE/AGER. In terms of tissue distribution, saliva (at protein level). Salivary gland (at protein level). Not detected in midgut, ovary, trachea, Malpighian tubule system, synganglion and cuticle.

The protein localises to the secreted. It is found in the cytoplasm. Resistant to inhibition by host SERPINE1. Inhibited by PMSF, aprotinin, antipain and leupeptin. Inhibited by Zn(2+). Functionally, anticoagulant and fibrinolytic protease that modulates blood feeding of ticks on vertebrate hosts. Degrades host fibrinogen and delays fibrin clot formation. Promotes lysis of fibrin clots in the host by activating host plasminogen in the presence of soluble fibrin. Binds Ca(2+). Hydrolyzes serine protease-specific substrates. Required for the formation of a blood pool, an accumulation of blood and tissue fluid developed at the tick's feeding site. Blocks activation of host AGER/RAGE. Reduces AGER/RAGE-dependent production of reactive oxygen species (ROS) in human endothelial cells. Prevents AGER/RAGE-dependent activation of NF-kappa-B and suppresses expression of adhesion molecules, such as VCAM1, ICAM1 and SELE, and secretion of cytokines, such as CSF3/GCSF and TGF-beta, in human endothelial cells. Suppresses RAGE/AGER-mediated migration of mouse peritoneal resident cells. Reduces AGER/RAGE-mediated inflammation in mice tissues. The chain is Longistatin from Haemaphysalis longicornis (Bush tick).